Here is a 1809-residue protein sequence, read N- to C-terminus: Pyochelin synthetase PchF (1809 aa).

Residues 69 to 490 (FPLTPVQAAY…GLLRRLAQSP (422 aa)) form a condensation/cyclization region. The tract at residues 520–915 (FAERALLTPD…GREDDQVKIR (396 aa)) is adenylation. A Carrier domain is found at 1407 to 1488 (APADELESAL…GLAERLRSAP (82 aa)). Position 1442 is an O-(pantetheine 4'-phosphoryl)serine (serine 1442). Residues 1584–1797 (LGRRYAEALH…FDCLGEALAQ (214 aa)) are thioesterase.

This sequence belongs to the NRP synthetase family. The cofactor is pantetheine 4'-phosphate.

The catalysed reaction is holo-[peptidyl-carrier protein] + L-cysteine + ATP = L-cysteinyl-[peptidyl-carrier protein] + AMP + diphosphate. Its pathway is siderophore biosynthesis. In terms of biological role, involved in the biosynthesis of the siderophore pyochelin. Adenylates L-cysteine and loads it onto its peptidyl carrier domain via a thioester linkage to the phosphopanthetheine moiety. Then forms a peptide bond between the salicyl-thiazolinyl intermediate bound to the second carrier domain of PchE and the cysteine bound to its own peptidyl carrier domain to form the salicyl-thiazolinyl-cysteinyl-S-PCP2 intermediate. It subsequently cyclizes the C-terminal cysteine to form the second thiazoline heterocycle in the salicyl-thiazolinyl-thiazolinyl-S-PCP2 intermediate. When this intermediate is released by the action of a thioesterase, it produces the tricyclic acid hydroxyphenyl-thiazolyl-thiazolinyl-carboxylic acid (HPTT-COOH), an advanced intermediate containing the aryl-4,2-bis-heterocyclic skeleton of the bithiazoline class of siderophores. The protein is Pyochelin synthetase PchF of Pseudomonas aeruginosa (strain UCBPP-PA14).